The sequence spans 952 residues: ALS2 C-terminal-like protein (952 aa).

8 MORN repeats span residues Y358–N380, H381–E403, Y409–V431, Y432–P454, Y459–E481, Y483–C505, Y506–L528, and Y529–T552. One can recognise a VPS9 domain in the interval L795 to H941.

As to quaternary structure, homodimer. Forms a heteromeric complex with ALS2. Interacts with ALS2 and RAB5A. In terms of tissue distribution, expressed in heart, lung, liver and kidney.

Its subcellular location is the cytoplasm. In terms of biological role, acts as a guanine nucleotide exchange factor (GEF) for Rab5 GTPase. Regulates the ALS2-mediated endosome dynamics. In Mus musculus (Mouse), this protein is ALS2 C-terminal-like protein (Als2cl).